The primary structure comprises 382 residues: Dual-specificity RNA methyltransferase RlmN (382 aa).

The active-site Proton acceptor is the glutamate 95. In terms of domain architecture, Radical SAM core spans 101–349 (EETRGTLCVS…TTVRKTRGDD (249 aa)). Cysteines 108 and 354 form a disulfide. Residues cysteine 115, cysteine 119, and cysteine 122 each contribute to the [4Fe-4S] cluster site. Residues 180–181 (GE), serine 212, 234–236 (SLH), and asparagine 311 contribute to the S-adenosyl-L-methionine site. Cysteine 354 acts as the S-methylcysteine intermediate in catalysis.

The protein belongs to the radical SAM superfamily. RlmN family. [4Fe-4S] cluster serves as cofactor.

The protein resides in the cytoplasm. The enzyme catalyses adenosine(2503) in 23S rRNA + 2 reduced [2Fe-2S]-[ferredoxin] + 2 S-adenosyl-L-methionine = 2-methyladenosine(2503) in 23S rRNA + 5'-deoxyadenosine + L-methionine + 2 oxidized [2Fe-2S]-[ferredoxin] + S-adenosyl-L-homocysteine. It carries out the reaction adenosine(37) in tRNA + 2 reduced [2Fe-2S]-[ferredoxin] + 2 S-adenosyl-L-methionine = 2-methyladenosine(37) in tRNA + 5'-deoxyadenosine + L-methionine + 2 oxidized [2Fe-2S]-[ferredoxin] + S-adenosyl-L-homocysteine. In terms of biological role, specifically methylates position 2 of adenine 2503 in 23S rRNA and position 2 of adenine 37 in tRNAs. m2A2503 modification seems to play a crucial role in the proofreading step occurring at the peptidyl transferase center and thus would serve to optimize ribosomal fidelity. The chain is Dual-specificity RNA methyltransferase RlmN from Paraburkholderia phymatum (strain DSM 17167 / CIP 108236 / LMG 21445 / STM815) (Burkholderia phymatum).